An 839-amino-acid chain; its full sequence is Katanin p80 WD40 repeat-containing subunit B1 homolog KTN80.3 (839 aa).

7 WD repeats span residues 14–54 (AHSA…AILS), 57–96 (GHSS…VVRT), 99–138 (GHRS…CIHT), 141–182 (GHTR…HEFK), 184–222 (HEGK…LIGS), 225–265 (TETT…DGVD), and 267–304 (GWSN…TEPM). A DWD box motif is present at residues 115–131 (FFASGSLDTNLKIWDIR). 4 disordered regions span residues 303–340 (PMSG…LGKL), 357–435 (GKLS…KSAS), 501–561 (LQSK…RTNK), and 575–648 (SLVR…PSNM). Polar residues-rich tracts occupy residues 307-334 (GATQ…NSSK), 375-385 (TGRSSVSQSSD), 411-435 (TLSS…KSAS), 501-533 (LQSK…QSQP), 589-602 (DLIS…SSPT), and 630-648 (VSSS…PSNM).

Belongs to the WD repeat KATNB1 family. Component of KTN80-KTN1 complexes composed of a hexamer of KTN1-KTN80 heterodimers that sense microtubule (MT) geometry to confer precise MT severing. Interacts directly with AAA1/KTN1 and KTN80.1, and weakly with KTN80.4. In terms of tissue distribution, expressed in siliques, flowers, leaves, stems and roots.

The protein localises to the cytoplasm. It localises to the cytoskeleton. In terms of biological role, may participate in a complex which severs microtubules in an ATP-dependent manner. Microtubule severing may promote rapid reorganization of cellular microtubule arrays. Confers precision to microtubule (MT) severing by specific targeting of KTN1 to MT cleavage sites such as crossover or branching nucleation sites. Together with other KTN80s, regulates cell elongation by modulating MT organization. The polypeptide is Katanin p80 WD40 repeat-containing subunit B1 homolog KTN80.3 (Arabidopsis thaliana (Mouse-ear cress)).